A 585-amino-acid chain; its full sequence is Arginine--tRNA ligase (585 aa).

Residues 131–141 (ANPTGPMHVGH) carry the 'HIGH' region motif.

The protein belongs to the class-I aminoacyl-tRNA synthetase family. As to quaternary structure, monomer.

It localises to the cytoplasm. The enzyme catalyses tRNA(Arg) + L-arginine + ATP = L-arginyl-tRNA(Arg) + AMP + diphosphate. This Bartonella tribocorum (strain CIP 105476 / IBS 506) protein is Arginine--tRNA ligase.